The primary structure comprises 759 residues: MKIAIVLLAIVGLAASASITDKKVKIADKDFLAKQKFLFEIVYRVEDPLMFEEWIKMGKSFTFDKADYNHFDMYMDKFYEAYKYGAILPKGEFFYYAKNWEVFQRNVAFARMHCNEGMFVYALTLAVIHRDDFHGLILPSIYEIFPQYFFNSKFVYEAEKFDYDVWSKYIMYEKEYKDILYKDYATFYKNHDNHYYYFFTKDFKTYQWWKMMGLGEHWYSEDRFMLRDNMDKYNKDSKYLEIFEGTKMFFMPVDYTRDIEFFNKESALSYFTEDVGFNAYWYYLNMDYAFFLDGKTYGLNKDRRGEYWLYNVRQLLSRYYMERLSHGFGEIPAFSFIDSIEYGYNPQLVYHNGVGFSYRKNYYEVESFGKFDYFYKVLDFFNRMDEIITKGVYVTYDGKTIDLRKPESIEYIGSIMQGNVDTLHSYFFKYWYMFAHMYLAYDNTQTLQVFPHIFLNYETSMRDPMFYMFYKKIASVYFQFFNYVKPYTHEELLFPGVTIKDVKVSELVTYFDLVDFDVTNLMNDKMTFVDGQFVWDKTLLARQMRLNHKPFDFDFVIESDKAQKVVIRTYLGPKYDEFGRVISLTENRENFMELDSFLYTLKSGVNEFKRYSKDFYWTVEDRTTYTELYKYVMLALQGKYDFPLDISEPHCGFPDRLVLPHGWYKGMPMQFFFYVTPFTTEYEQFSTYDYSYSCGLGSGVRYIDETCFGYPFDREIDEYEFFVPNMYFKDVKIFHQDTFEKYFEHKYEKFGHFDYNYHH.

Positions 1-15 (MKIAIVLLAIVGLAA) are cleaved as a signal peptide.

This sequence belongs to the hemocyanin family. In terms of assembly, heterohexamer. Fat body.

Its subcellular location is the secreted. It localises to the extracellular space. In terms of biological role, arylphorin is a larval storage protein (LSP) which may serve as a storage protein used primarily as a source of aromatic amino acids for protein synthesis during metamorphosis. It is a constituent of the sclerotizing system of the cuticle, and serves as a carrier for ecdysteroid hormone. The polypeptide is Arylphorin subunit C223 (Calliphora vicina (Blue blowfly)).